A 547-amino-acid polypeptide reads, in one-letter code: Fimbria adhesin EcpD (547 aa).

The signal sequence occupies residues 1–23 (MRVNLLIAMIIFALIWPVTALRA).

Belongs to the EcpD/MatE family. In terms of assembly, forms polymers. Interacts with EcpA.

The protein resides in the fimbrium. Its function is as follows. Part of the ecpRABCDE operon, which encodes the E.coli common pilus (ECP). ECP is found in both commensal and pathogenic strains and plays a dual role in early-stage biofilm development and host cell recognition. Tip pilus adhesin, which is required for assembly of EcpA into fibers. The protein is Fimbria adhesin EcpD (ecpD) of Escherichia coli O157:H7.